The chain runs to 1674 residues: Kinesin-like protein KIF14 (1674 aa).

Positions 1–391 are required for PRC1-binding; that stretch reads MSVHTSHSRH…TEPDSLKVEN (391 aa). 2 disordered regions span residues 132-158 and 171-374; these read ETLN…KGVN and KDSN…PEEN. Composition is skewed to polar residues over residues 142 to 151 and 202 to 214; these read GSDSASQASR and SRAP…QTEA. Position 257 is a phosphoserine (Ser-257). Thr-262 is modified (phosphothreonine). The segment covering 267 to 279 has biased composition (basic and acidic residues); sequence VLEHRWTPRHDPP. The segment covering 302-311 has biased composition (polar residues); the sequence is TFRSASSESR. Residues 317–329 are compositionally biased toward basic and acidic residues; it reads VPEHRWTPRHDLP. The required for microtubule-binding with high affinity stretch occupies residues 391–772; it reads NSQVTVAVRV…AAQRSNRNID (382 aa). The region spanning 393-736 is the Kinesin motor domain; sequence QVTVAVRVRP…LRYATQARLI (344 aa). ATP is bound at residue 482 to 489; that stretch reads GQTGSGKS. Residues 743-826 adopt a coiled-coil conformation; the sequence is NEDMNAKLIR…QETKELQKAG (84 aa). An FHA domain is found at 860 to 911; sequence TTVGKHTPSSSHDIQLSGVLIADDHCTIRNFGGTVSIVPAGEAKTYVNGTHI. The segment at 936–1674 is required for CIT-binding; sequence PVEVQKGKKL…DCTPNRIQWV (739 aa). Positions 961-1110 form a coiled coil; sequence EFAKNELLTA…VQMLQENRGN (150 aa). Phosphoserine occurs at positions 973 and 1326. The interval 1618–1674 is disordered; the sequence is GLSKPWESCSSNSKEEQCKSDRADCGKSGPRRACEPHGDATPAVSSGDCTPNRIQWV. Residues 1630 to 1642 are compositionally biased toward basic and acidic residues; it reads SKEEQCKSDRADC. Polar residues predominate over residues 1660 to 1674; the sequence is AVSSGDCTPNRIQWV.

Belongs to the TRAFAC class myosin-kinesin ATPase superfamily. Kinesin family. Directly interacts with PRC1 within a complex also containing KIF4A, KIF20A and KIF23; targets to the central spindle. Directly interacts with CIT depending on the activation state of the kinase (stronger interaction with the kinase-dead form); targets to the midbody. Interacts with ARRB2; the interaction is detected in the nucleus upon OR1D2 stimulation. Interacts with AKT1; the interaction is detected in the plasma membrane upon INS stimulation and promotes AKT1 phosphorylation. Interacts with SVIL; at midbody during cytokinesis. Interacts with RADIL (via PDZ domain); recruits RADIL to the microtubule network restricting RADIL from interaction with activated RAP1A.

Its subcellular location is the nucleus. The protein resides in the cytoplasm. It is found in the cytoskeleton. It localises to the spindle. The protein localises to the midbody. Microtubule motor protein that binds to microtubules with high affinity through each tubulin heterodimer and has an ATPase activity. Plays a role in many processes like cell division, cytokinesis and also in cell proliferation and apoptosis. During cytokinesis, targets to central spindle and midbody through its interaction with PRC1 and CIT respectively. Regulates cell growth through regulation of cell cycle progression and cytokinesis. During cell cycle progression acts through SCF-dependent proteasomal ubiquitin-dependent protein catabolic process which controls CDKN1B degradation, resulting in positive regulation of cyclins, including CCNE1, CCND1 and CCNB1. During late neurogenesis, regulates the cerebellar and cerebral cortex development and olfactory bulb development through regulation of apoptosis, cell proliferation and cell division. Also is required for chromosome congression and alignment during mitotic cell cycle process. Regulates cell spreading, focal adhesion dynamics, and cell migration through its interaction with RADIL resulting in regulation of RAP1A-mediated inside-out integrin activation by tethering RADIL on microtubules. This is Kinesin-like protein KIF14 from Mus musculus (Mouse).